The primary structure comprises 155 residues: Aspartate carbamoyltransferase regulatory chain (155 aa).

4 residues coordinate Zn(2+): Cys-112, Cys-117, Cys-138, and Cys-141.

This sequence belongs to the PyrI family. Contains catalytic and regulatory chains. It depends on Zn(2+) as a cofactor.

Functionally, involved in allosteric regulation of aspartate carbamoyltransferase. The protein is Aspartate carbamoyltransferase regulatory chain of Methanocorpusculum labreanum (strain ATCC 43576 / DSM 4855 / Z).